A 228-amino-acid chain; its full sequence is 2-C-methyl-D-erythritol 4-phosphate cytidylyltransferase (228 aa).

Belongs to the IspD/TarI cytidylyltransferase family. IspD subfamily.

The enzyme catalyses 2-C-methyl-D-erythritol 4-phosphate + CTP + H(+) = 4-CDP-2-C-methyl-D-erythritol + diphosphate. Its pathway is isoprenoid biosynthesis; isopentenyl diphosphate biosynthesis via DXP pathway; isopentenyl diphosphate from 1-deoxy-D-xylulose 5-phosphate: step 2/6. In terms of biological role, catalyzes the formation of 4-diphosphocytidyl-2-C-methyl-D-erythritol from CTP and 2-C-methyl-D-erythritol 4-phosphate (MEP). The chain is 2-C-methyl-D-erythritol 4-phosphate cytidylyltransferase from Nostoc sp. (strain PCC 7120 / SAG 25.82 / UTEX 2576).